The sequence spans 338 residues: Glycerol-3-phosphate dehydrogenase [NAD(P)+] (338 aa).

S13, W14, and K108 together coordinate NADPH. The sn-glycerol 3-phosphate site is built by K108, G139, and S141. Residue A143 coordinates NADPH. Sn-glycerol 3-phosphate is bound by residues K194, D247, S257, R258, and N259. K194 serves as the catalytic Proton acceptor. R258 is a binding site for NADPH. Positions 282 and 284 each coordinate NADPH.

The protein belongs to the NAD-dependent glycerol-3-phosphate dehydrogenase family.

The protein resides in the cytoplasm. The catalysed reaction is sn-glycerol 3-phosphate + NAD(+) = dihydroxyacetone phosphate + NADH + H(+). The enzyme catalyses sn-glycerol 3-phosphate + NADP(+) = dihydroxyacetone phosphate + NADPH + H(+). Its pathway is membrane lipid metabolism; glycerophospholipid metabolism. Its function is as follows. Catalyzes the reduction of the glycolytic intermediate dihydroxyacetone phosphate (DHAP) to sn-glycerol 3-phosphate (G3P), the key precursor for phospholipid synthesis. In Streptococcus pyogenes serotype M12 (strain MGAS9429), this protein is Glycerol-3-phosphate dehydrogenase [NAD(P)+].